We begin with the raw amino-acid sequence, 932 residues long: Protein translocase subunit SecA (932 aa).

ATP is bound by residues Gln90, 108–112, and Asp498; that span reads GEGKT.

This sequence belongs to the SecA family. As to quaternary structure, monomer and homodimer. Part of the essential Sec protein translocation apparatus which comprises SecA, SecYEG and auxiliary proteins SecDF. Other proteins may also be involved.

It localises to the cell inner membrane. Its subcellular location is the cellular thylakoid membrane. The protein resides in the cytoplasm. The catalysed reaction is ATP + H2O + cellular proteinSide 1 = ADP + phosphate + cellular proteinSide 2.. Its function is as follows. Part of the Sec protein translocase complex. Interacts with the SecYEG preprotein conducting channel. Has a central role in coupling the hydrolysis of ATP to the transfer of proteins into and across the cell membrane, serving as an ATP-driven molecular motor driving the stepwise translocation of polypeptide chains across the membrane. In terms of biological role, probably participates in protein translocation into and across both the cytoplasmic and thylakoid membranes in cyanobacterial cells. This Synechocystis sp. (strain ATCC 27184 / PCC 6803 / Kazusa) protein is Protein translocase subunit SecA.